Consider the following 251-residue polypeptide: MLAKRIIPCLDVRDGRVVKGINFEGLRDAGSILEQARFYNNEMADELVFLDISASIESRRTTLEEVLKVSGEVFIPLTVGGGISSVERARDAFLHGADKVSVNTAAVNDPVLISRIAERFGSQAVVVAIDVKKVNGEYIVHTHSGKTPTQYEALEWAHRVQELGAGEILLTSMDRDGTQEGYDNEILKRISTSVHIPVIASGGAGNLEHLYEGFTKGHADAALAASIFHFRTYSIREAKEYLRDKGIAVRL.

Catalysis depends on residues Asp11 and Asp130.

It belongs to the HisA/HisF family. Heterodimer of HisH and HisF.

The protein localises to the cytoplasm. The catalysed reaction is 5-[(5-phospho-1-deoxy-D-ribulos-1-ylimino)methylamino]-1-(5-phospho-beta-D-ribosyl)imidazole-4-carboxamide + L-glutamine = D-erythro-1-(imidazol-4-yl)glycerol 3-phosphate + 5-amino-1-(5-phospho-beta-D-ribosyl)imidazole-4-carboxamide + L-glutamate + H(+). Its pathway is amino-acid biosynthesis; L-histidine biosynthesis; L-histidine from 5-phospho-alpha-D-ribose 1-diphosphate: step 5/9. In terms of biological role, IGPS catalyzes the conversion of PRFAR and glutamine to IGP, AICAR and glutamate. The HisF subunit catalyzes the cyclization activity that produces IGP and AICAR from PRFAR using the ammonia provided by the HisH subunit. In Chlorobaculum parvum (strain DSM 263 / NCIMB 8327) (Chlorobium vibrioforme subsp. thiosulfatophilum), this protein is Imidazole glycerol phosphate synthase subunit HisF.